A 64-amino-acid chain; its full sequence is Potassium channel toxin kappa-KTx 3.1 (64 aa).

The N-terminal stretch at 1-26 (MKSTLMTASVLILVLLSIVDYASVYA) is a signal peptide. Positions 27 to 36 (EFIDSEISLE) are excised as a propeptide. Disulfide bonds link Cys-43-Cys-61 and Cys-47-Cys-57.

This sequence belongs to the short scorpion toxin superfamily. Potassium channel inhibitor kappa-KTx family. Kappa-KTx 3 subfamily. In terms of tissue distribution, expressed by the venom gland.

Its subcellular location is the secreted. In terms of biological role, potassium channel inhibitor (Kv). The protein is Potassium channel toxin kappa-KTx 3.1 of Heterometrus petersii (Asian forest scorpion).